Reading from the N-terminus, the 33-residue chain is Photosystem II reaction center protein Psb30 (33 aa).

The helical transmembrane segment at 5–25 (VIAQLASLALIIVLGPLVIGL) threads the bilayer.

The protein belongs to the Psb30/Ycf12 family. PSII is composed of 1 copy each of membrane proteins PsbA, PsbB, PsbC, PsbD, PsbE, PsbF, PsbH, PsbI, PsbJ, PsbK, PsbL, PsbM, PsbT, PsbX, PsbY, PsbZ, Psb30/Ycf12, peripheral proteins of the oxygen-evolving complex and a large number of cofactors. It forms dimeric complexes.

The protein resides in the plastid. The protein localises to the chloroplast thylakoid membrane. Its function is as follows. A core subunit of photosystem II (PSII), probably helps stabilize the reaction center. The sequence is that of Photosystem II reaction center protein Psb30 from Chara vulgaris (Common stonewort).